A 474-amino-acid polypeptide reads, in one-letter code: Ribulose bisphosphate carboxylase large chain (474 aa).

Residues asparagine 122 and threonine 172 each coordinate substrate. Residue lysine 174 is the Proton acceptor of the active site. Residue lysine 176 coordinates substrate. Positions 200, 202, and 203 each coordinate Mg(2+). At lysine 200 the chain carries N6-carboxylysine. The active-site Proton acceptor is histidine 293. Positions 294, 326, and 378 each coordinate substrate.

The protein belongs to the RuBisCO large chain family. Type I subfamily. Heterohexadecamer of 8 large chains and 8 small chains; disulfide-linked. The disulfide link is formed within the large subunit homodimers. Mg(2+) is required as a cofactor. The disulfide bond which can form in the large chain dimeric partners within the hexadecamer appears to be associated with oxidative stress and protein turnover.

Its subcellular location is the carboxysome. The enzyme catalyses 2 (2R)-3-phosphoglycerate + 2 H(+) = D-ribulose 1,5-bisphosphate + CO2 + H2O. It carries out the reaction D-ribulose 1,5-bisphosphate + O2 = 2-phosphoglycolate + (2R)-3-phosphoglycerate + 2 H(+). Functionally, ruBisCO catalyzes two reactions: the carboxylation of D-ribulose 1,5-bisphosphate, the primary event in carbon dioxide fixation, as well as the oxidative fragmentation of the pentose substrate in the photorespiration process. Both reactions occur simultaneously and in competition at the same active site. The sequence is that of Ribulose bisphosphate carboxylase large chain from Synechococcus sp. (strain JA-2-3B'a(2-13)) (Cyanobacteria bacterium Yellowstone B-Prime).